The following is a 609-amino-acid chain: uncharacterized protein (609 aa).

Belongs to the NodU/CmcH family.

This is an uncharacterized protein from Methanocaldococcus jannaschii (strain ATCC 43067 / DSM 2661 / JAL-1 / JCM 10045 / NBRC 100440) (Methanococcus jannaschii).